The chain runs to 666 residues: Long-chain-fatty-acid--CoA ligase ACSBG2 (666 aa).

ATP-binding positions include 230-238 (TSGTTGIPK), 418-423 (ELYGLS), aspartate 496, and arginine 624.

The protein belongs to the ATP-dependent AMP-binding enzyme family. Bubblegum subfamily. As to expression, testis-specific.

It is found in the cytoplasm. Its subcellular location is the membrane. The catalysed reaction is a long-chain fatty acid + ATP + CoA = a long-chain fatty acyl-CoA + AMP + diphosphate. It carries out the reaction (5Z,8Z,11Z,14Z)-eicosatetraenoate + ATP + CoA = (5Z,8Z,11Z,14Z)-eicosatetraenoyl-CoA + AMP + diphosphate. The enzyme catalyses hexadecanoate + ATP + CoA = hexadecanoyl-CoA + AMP + diphosphate. It catalyses the reaction (9Z)-octadecenoate + ATP + CoA = (9Z)-octadecenoyl-CoA + AMP + diphosphate. The catalysed reaction is (9Z,12Z)-octadecadienoate + ATP + CoA = (9Z,12Z)-octadecadienoyl-CoA + AMP + diphosphate. It carries out the reaction tetracosanoate + ATP + CoA = tetracosanoyl-CoA + AMP + diphosphate. In terms of biological role, catalyzes the conversion of fatty acids such as long chain and very long-chain fatty acids to their active form acyl-CoAs for both synthesis of cellular lipids, and degradation via beta-oxidation. Can activate diverse saturated, monosaturated and polyunsaturated fatty acids. Has increased ability to activate oleic and linoleic acid. May play a role in spermatogenesis. The polypeptide is Long-chain-fatty-acid--CoA ligase ACSBG2 (Homo sapiens (Human)).